An 813-amino-acid chain; its full sequence is Phosphoribosylformylglycinamidine synthase subunit PurL (813 aa).

Residue His-56 is part of the active site. 2 residues coordinate ATP: Tyr-59 and Lys-103. Glu-105 is a binding site for Mg(2+). Substrate contacts are provided by residues Ser-106–His-109 and Arg-128. His-107 serves as the catalytic Proton acceptor. Asp-129 is a binding site for Mg(2+). A substrate-binding site is contributed by Gln-253. Asp-281 is a Mg(2+) binding site. Glu-325–Gln-327 lines the substrate pocket. ATP is bound by residues Asn-511 and Gly-548. Asn-549 is a binding site for Mg(2+). Residue Ser-551 coordinates substrate.

It belongs to the FGAMS family. As to quaternary structure, monomer. Part of the FGAM synthase complex composed of 1 PurL, 1 PurQ and 2 PurS subunits.

It localises to the cytoplasm. It carries out the reaction N(2)-formyl-N(1)-(5-phospho-beta-D-ribosyl)glycinamide + L-glutamine + ATP + H2O = 2-formamido-N(1)-(5-O-phospho-beta-D-ribosyl)acetamidine + L-glutamate + ADP + phosphate + H(+). It functions in the pathway purine metabolism; IMP biosynthesis via de novo pathway; 5-amino-1-(5-phospho-D-ribosyl)imidazole from N(2)-formyl-N(1)-(5-phospho-D-ribosyl)glycinamide: step 1/2. Its function is as follows. Part of the phosphoribosylformylglycinamidine synthase complex involved in the purines biosynthetic pathway. Catalyzes the ATP-dependent conversion of formylglycinamide ribonucleotide (FGAR) and glutamine to yield formylglycinamidine ribonucleotide (FGAM) and glutamate. The FGAM synthase complex is composed of three subunits. PurQ produces an ammonia molecule by converting glutamine to glutamate. PurL transfers the ammonia molecule to FGAR to form FGAM in an ATP-dependent manner. PurS interacts with PurQ and PurL and is thought to assist in the transfer of the ammonia molecule from PurQ to PurL. The sequence is that of Phosphoribosylformylglycinamidine synthase subunit PurL from Corynebacterium jeikeium (strain K411).